Consider the following 266-residue polypeptide: Undecaprenyl-diphosphatase (266 aa).

A run of 8 helical transmembrane segments spans residues 4–24 (ILRVIILGFVQGISEFLPISS), 39–59 (LPIVFDIYLHFATVLVVIIYY), 88–108 (LNLILLILIITFFTALIGIFI), 114–134 (LFTFKLVLFNFIVTSILLFLI), 147–167 (IFFSGLLIGIMQGIGAMPGIS), 186–206 (SLEISFLSLIPIVFGSLFLKY), 214–234 (IIFNIFEINLGAIFAFIFGLF), and 246–266 (SKLYYFSIYLVSVVSLVYFLV).

The protein belongs to the UppP family.

It is found in the cell inner membrane. It catalyses the reaction di-trans,octa-cis-undecaprenyl diphosphate + H2O = di-trans,octa-cis-undecaprenyl phosphate + phosphate + H(+). In terms of biological role, catalyzes the dephosphorylation of undecaprenyl diphosphate (UPP). Confers resistance to bacitracin. This is Undecaprenyl-diphosphatase from Borrelia recurrentis (strain A1).